We begin with the raw amino-acid sequence, 447 residues long: Alpha-1,3-mannosyl-glycoprotein 2-beta-N-acetylglucosaminyltransferase (447 aa).

Residues 1 to 6 (MLKKQS) lie on the Cytoplasmic side of the membrane. Residues 7-29 (AGLVLWGAILFVAWNALLLLFFW) traverse the membrane as a helical; Signal-anchor for type II membrane protein segment. At 30–447 (TRPVPSRLPS…TWDGYDPSWT (418 aa)) the chain is on the lumenal side. Cysteine 115 and cysteine 145 form a disulfide bridge. Positions 117, 144, 190, and 212 each coordinate substrate. Aspartate 213 provides a ligand contact to Mn(2+). Cysteine 239 and cysteine 305 form a disulfide bridge. Residue aspartate 291 is the Proton acceptor of the active site. Residue serine 322 participates in substrate binding.

The protein belongs to the glycosyltransferase 13 family. As to quaternary structure, interacts with MGAT4D. Interacts with BRI3. It depends on Mn(2+) as a cofactor.

It localises to the golgi apparatus membrane. It is found in the cytoplasm. The protein localises to the perinuclear region. It carries out the reaction N(4)-(alpha-D-Man-(1-&gt;3)-[alpha-D-Man-(1-&gt;3)-[alpha-D-Man-(1-&gt;6)]-alpha-D-Man-(1-&gt;6)]-beta-D-Man-(1-&gt;4)-beta-D-GlcNAc-(1-&gt;4)-beta-D-GlcNAc)-L-asparaginyl-[protein] (N-glucan mannose isomer 5A1,2) + UDP-N-acetyl-alpha-D-glucosamine = N(4)-{beta-D-GlcNAc-(1-&gt;2)-alpha-D-Man-(1-&gt;3)-[alpha-D-Man-(1-&gt;3)-[alpha-D-Man-(1-&gt;6)]-alpha-D-Man-(1-&gt;6)]-beta-D-Man-(1-&gt;4)-beta-D-GlcNAc-(1-&gt;4)-beta-D-GlcNAc}-L-asparaginyl-[protein] + UDP + H(+). The protein operates within protein modification; protein glycosylation. Functionally, initiates complex N-linked carbohydrate formation. Essential for the conversion of high-mannose to hybrid and complex N-glycans. This is Alpha-1,3-mannosyl-glycoprotein 2-beta-N-acetylglucosaminyltransferase (MGAT1) from Oryctolagus cuniculus (Rabbit).